A 417-amino-acid polypeptide reads, in one-letter code: Transcobalamin-1 (417 aa).

An N-terminal signal peptide occupies residues 1-25 (MRQSHQLPLVGLLLFSLIPSQLCQS). A globular N-terminal alpha domain region spans residues 24 to 308 (QSCVVSEKDY…DVTKLLLVPK (285 aa)). N90 carries N-linked (GlcNAc...) asparagine glycosylation. 143–147 (TNYYQ) is a cyanocob(III)alamin binding site. C156 and C198 are joined by a disulfide. N161, N166, and N179 each carry an N-linked (GlcNAc...) asparagine glycan. The cyanocob(III)alamin site is built by D187 and Q287. Residues 309–327 (VQVNITDEPVPVVPTLSPE) form a flexible linker region. N-linked (GlcNAc...) asparagine glycosylation is found at N312, N328, N345, and N360. The interval 328–417 (NISVIYCVKI…GIMLSKMESI (90 aa)) is globular C-terminal beta domain. Cyanocob(III)alamin-binding positions include 376 to 377 (YI) and 393 to 395 (WEH).

Belongs to the eukaryotic cobalamin transport proteins family. Contains about 30% carbohydrates. In terms of tissue distribution, haptocorrins are a family of cobalamin-binding glycoproteins found in blood, salivary and mucosal secretions.

The protein resides in the secreted. Functionally, binds vitamin B12 with femtomolar affinity and protects it from the acidic environment of the stomach. Binds to cobalamin and to cobalamin analogs such as cobinamide. The protein is Transcobalamin-1 (TCN1) of Sus scrofa (Pig).